The chain runs to 479 residues: NAC domain-containing protein 45 (479 aa).

Positions 6–157 constitute an NAC domain; that stretch reads LPPGFRFHPT…AYALCRVFKK (152 aa). A DNA-binding region spans residues 105–163; sequence IGTKKTLVYYRGRAPHGIRTGWVMHEYRLDETECEPSAYGMQDAYALCRVFKKIVIEAK.

As to expression, expressed in a few sieve element cells before enucleation and in phloem-pole pericycle cells.

The protein localises to the nucleus. Functionally, transcription factor directing sieve element enucleation and cytosol degradation. Not required for formation of lytic vacuoles. Regulates, with NAC086, the transcription of NEN1, NEN2, NEN3, NEN4, RTM1, RTM2, UBP16, PLDZETA, ABCB10 and At1g26450. The polypeptide is NAC domain-containing protein 45 (Arabidopsis thaliana (Mouse-ear cress)).